Reading from the N-terminus, the 651-residue chain is Probable ATP-dependent helicase MJ0942 (651 aa).

The 250-residue stretch at 6 to 255 (YIKEKFPYPK…EIIEKYLTSR (250 aa)) folds into the Helicase ATP-binding domain. Residue 41-48 (APTGVGKT) coordinates ATP. Positions 102, 149, and 154 each coordinate [4Fe-4S] cluster. A DEAH box motif is present at residues 195–198 (DEAH). Residues 449–638 (NLLKILEAIN…NYEVMSLDMA (190 aa)) form the Helicase C-terminal domain.

This sequence belongs to the helicase family. DinG subfamily. Requires [4Fe-4S] cluster as cofactor.

The enzyme catalyses Couples ATP hydrolysis with the unwinding of duplex DNA at the replication fork by translocating in the 5'-3' direction. This creates two antiparallel DNA single strands (ssDNA). The leading ssDNA polymer is the template for DNA polymerase III holoenzyme which synthesizes a continuous strand.. The catalysed reaction is ATP + H2O = ADP + phosphate + H(+). In terms of biological role, might be a 5'-3' DNA helicase. This is Probable ATP-dependent helicase MJ0942 from Methanocaldococcus jannaschii (strain ATCC 43067 / DSM 2661 / JAL-1 / JCM 10045 / NBRC 100440) (Methanococcus jannaschii).